A 422-amino-acid chain; its full sequence is UDP-N-acetylglucosamine 1-carboxyvinyltransferase (422 aa).

24–25 (KN) lines the phosphoenolpyruvate pocket. Position 93 (arginine 93) interacts with UDP-N-acetyl-alpha-D-glucosamine. Cysteine 117 (proton donor) is an active-site residue. Cysteine 117 carries the 2-(S-cysteinyl)pyruvic acid O-phosphothioketal modification. UDP-N-acetyl-alpha-D-glucosamine is bound by residues 122–126 (RPVDL), 162–165 (KVSV), aspartate 307, and isoleucine 329.

This sequence belongs to the EPSP synthase family. MurA subfamily.

Its subcellular location is the cytoplasm. It catalyses the reaction phosphoenolpyruvate + UDP-N-acetyl-alpha-D-glucosamine = UDP-N-acetyl-3-O-(1-carboxyvinyl)-alpha-D-glucosamine + phosphate. It participates in cell wall biogenesis; peptidoglycan biosynthesis. Its function is as follows. Cell wall formation. Adds enolpyruvyl to UDP-N-acetylglucosamine. This Vibrio atlanticus (strain LGP32) (Vibrio splendidus (strain Mel32)) protein is UDP-N-acetylglucosamine 1-carboxyvinyltransferase.